The chain runs to 943 residues: WD repeat-containing protein 3 (943 aa).

WD repeat units lie at residues 21-60 (SQKGNIVFVTLRGEKGRYVAVPACEHVFIWDLRKGEKILI), 63-102 (GLKQEVTCLCPSPDGLHLAVGYEDGSIRIFSLLSGEGNVT), 105-144 (GHKAAITTLKYDQLGGRLASGSKDTDIIVWDVINESGLYR), 147-186 (GHKDAITQALFLREKNLLVTSGKDTMVKWWDLDTQHCFKT), and 189-228 (GHRTEVWGLVLLSEEKRLITGASDSELRVWDIAYLQEIED). Ser-240 and Ser-241 each carry phosphoserine. A Phosphothreonine modification is found at Thr-257. The stretch at 277–316 (EGRDRVVNLAVDKTGRILACHGTDSVLELFCILSKKEIQK) is one WD 6 repeat. Residues 326–345 (RKKAKLHSSKGEEEDPEVNV) form a disordered region. WD repeat units lie at residues 413-451 (GHRSDVRTLSFSSDNIAVLSAAADSIKIWNRSTLQCIRT), 453-493 (TCEY…ETID), 494-533 (AHDGALWSMSLSPDQRGFVTGGADKSVKFWDFELVKDENS), 547-586 (QLDEDVLCVSYSPNQKLLAVSLLDCTVKIFYVDTLKFFLS), 589-630 (GHKL…KSLF), 631-670 (AHDDSVMYLQFVPKSHLFFTAGKDHKIKQWDADKFEHIQT), and 673-712 (GHHQEIWCLAVSPSGDYVVSSSHDKSLRLWERTREPLILE). Residues Lys-474 and Lys-529 each participate in a glycyl lysine isopeptide (Lys-Gly) (interchain with G-Cter in SUMO2) cross-link. Ser-726 is subject to Phosphoserine.

It belongs to the WD repeat WDR3/UTP12 family. In terms of assembly, part of the small subunit (SSU) processome, composed of more than 70 proteins and the RNA chaperone small nucleolar RNA (snoRNA) U3. As to expression, ubiquitous.

The protein localises to the nucleus. The protein resides in the nucleolus. Functionally, part of the small subunit (SSU) processome, first precursor of the small eukaryotic ribosomal subunit. During the assembly of the SSU processome in the nucleolus, many ribosome biogenesis factors, an RNA chaperone and ribosomal proteins associate with the nascent pre-rRNA and work in concert to generate RNA folding, modifications, rearrangements and cleavage as well as targeted degradation of pre-ribosomal RNA by the RNA exosome. The sequence is that of WD repeat-containing protein 3 from Homo sapiens (Human).